We begin with the raw amino-acid sequence, 527 residues long: Glutamate--cysteine ligase (527 aa).

This sequence belongs to the glutamate--cysteine ligase type 1 family. Type 1 subfamily.

It catalyses the reaction L-cysteine + L-glutamate + ATP = gamma-L-glutamyl-L-cysteine + ADP + phosphate + H(+). It participates in sulfur metabolism; glutathione biosynthesis; glutathione from L-cysteine and L-glutamate: step 1/2. The protein is Glutamate--cysteine ligase of Bordetella bronchiseptica (strain ATCC BAA-588 / NCTC 13252 / RB50) (Alcaligenes bronchisepticus).